The chain runs to 528 residues: Phosphoenolpyruvate carboxykinase (ATP) (528 aa).

3 residues coordinate substrate: arginine 56, tyrosine 192, and lysine 198. Residues lysine 198, histidine 217, and 233-241 (GLSGTGKTT) each bind ATP. Mn(2+) is bound by residues lysine 198 and histidine 217. Residue aspartate 254 coordinates Mn(2+). ATP-binding residues include glutamate 282, arginine 319, and threonine 444. Substrate is bound at residue arginine 319.

Belongs to the phosphoenolpyruvate carboxykinase (ATP) family. Mn(2+) serves as cofactor.

It localises to the cytoplasm. It carries out the reaction oxaloacetate + ATP = phosphoenolpyruvate + ADP + CO2. It functions in the pathway carbohydrate biosynthesis; gluconeogenesis. In terms of biological role, involved in the gluconeogenesis. Catalyzes the conversion of oxaloacetate (OAA) to phosphoenolpyruvate (PEP) through direct phosphoryl transfer between the nucleoside triphosphate and OAA. In Bacillus cytotoxicus (strain DSM 22905 / CIP 110041 / 391-98 / NVH 391-98), this protein is Phosphoenolpyruvate carboxykinase (ATP).